The sequence spans 388 residues: Succinate--CoA ligase [ADP-forming] subunit beta (388 aa).

The region spanning 9-244 is the ATP-grasp domain; sequence KAIFRSMGVA…LEEEDPKEIE (236 aa). Residues K46, 53–55, E99, C102, and E107 each bind ATP; that span reads GRG. N199 and D213 together coordinate Mg(2+). Substrate-binding positions include N264 and 321–323; that span reads GIM.

The protein belongs to the succinate/malate CoA ligase beta subunit family. Heterotetramer of two alpha and two beta subunits. Mg(2+) is required as a cofactor.

The enzyme catalyses succinate + ATP + CoA = succinyl-CoA + ADP + phosphate. The catalysed reaction is GTP + succinate + CoA = succinyl-CoA + GDP + phosphate. Its pathway is carbohydrate metabolism; tricarboxylic acid cycle; succinate from succinyl-CoA (ligase route): step 1/1. Its function is as follows. Succinyl-CoA synthetase functions in the citric acid cycle (TCA), coupling the hydrolysis of succinyl-CoA to the synthesis of either ATP or GTP and thus represents the only step of substrate-level phosphorylation in the TCA. The beta subunit provides nucleotide specificity of the enzyme and binds the substrate succinate, while the binding sites for coenzyme A and phosphate are found in the alpha subunit. The chain is Succinate--CoA ligase [ADP-forming] subunit beta from Staphylococcus saprophyticus subsp. saprophyticus (strain ATCC 15305 / DSM 20229 / NCIMB 8711 / NCTC 7292 / S-41).